The following is a 342-amino-acid chain: Polygalacturonase inhibitor 1 (342 aa).

The N-terminal stretch at 1–29 is a signal peptide; that stretch reads MTQFNIPVTMSSSLSIILVILVSLRTALS. 2 cysteine pairs are disulfide-bonded: C32–C62 and C63–C72. Residue N64 is glycosylated (N-linked (GlcNAc...) asparagine). LRR repeat units lie at residues 82-107, 108-132, 133-156, 157-180, 181-205, 206-228, 229-252, 253-275, 276-299, and 300-319; these read NNLD…LPYL, NFLY…LTQL, HYLY…IKTL, VTLD…LPNL, GGIT…SKLF, TAMT…NLNL, AFVD…DKNT, KKIH…SKNL, NGLD…LKFL, and QSLN…GGNL. N141 carries an N-linked (GlcNAc...) asparagine glycan. N-linked (GlcNAc...) asparagine glycosylation occurs at N303. Cystine bridges form between C310/C332 and C334/C341.

Belongs to the polygalacturonase-inhibiting protein family.

The protein resides in the secreted. It is found in the cell wall. Its subcellular location is the membrane. Inhibitor of fungal polygalacturonase. It is an important factor for plant resistance to phytopathogenic fungi. Substrate preference is polygalacturonase (PG) from A.niger &gt;&gt; PG of F.oxysporum, A.solani or B.cinerea. Not active on PG from F.moniliforme. The polypeptide is Polygalacturonase inhibitor 1 (PGIP1) (Phaseolus vulgaris (Kidney bean)).